We begin with the raw amino-acid sequence, 462 residues long: Zinc finger CCCH domain-containing protein 8 (462 aa).

6 C3H1-type zinc fingers span residues arginine 105–tryptophan 133, glutamine 156–glutamate 184, arginine 209–aspartate 237, arginine 288–arginine 316, arginine 367–aspartate 395, and arginine 422–proline 450.

The protein is Zinc finger CCCH domain-containing protein 8 of Oryza sativa subsp. japonica (Rice).